Reading from the N-terminus, the 188-residue chain is UPF0157 protein VC_A0354 (188 aa).

It belongs to the UPF0157 (GrpB) family.

This chain is UPF0157 protein VC_A0354, found in Vibrio cholerae serotype O1 (strain ATCC 39315 / El Tor Inaba N16961).